Consider the following 110-residue polypeptide: Cytochrome c (110 aa).

Heme c-binding residues include cysteine 21, cysteine 24, histidine 25, and methionine 87.

The protein belongs to the cytochrome c family. In terms of processing, binds 1 heme c group covalently per subunit.

The protein localises to the mitochondrion intermembrane space. Its function is as follows. Electron carrier protein. The oxidized form of the cytochrome c heme group can accept an electron from the heme group of the cytochrome c1 subunit of cytochrome reductase. Cytochrome c then transfers this electron to the cytochrome oxidase complex, the final protein carrier in the mitochondrial electron-transport chain. The chain is Cytochrome c (CYCK) from Kluyveromyces lactis (strain ATCC 8585 / CBS 2359 / DSM 70799 / NBRC 1267 / NRRL Y-1140 / WM37) (Yeast).